Reading from the N-terminus, the 449-residue chain is Tubulin alpha chain (449 aa).

Residue Gln-11 coordinates GTP. At Lys-40 the chain carries N6-acetyllysine. GTP-binding residues include Glu-71, Ser-140, Gly-144, Thr-145, Thr-179, Asn-206, and Asn-228. Glu-71 is a binding site for Mg(2+). Glu-254 is a catalytic residue.

Belongs to the tubulin family. As to quaternary structure, dimer of alpha and beta chains. A typical microtubule is a hollow water-filled tube with an outer diameter of 25 nm and an inner diameter of 15 nM. Alpha-beta heterodimers associate head-to-tail to form protofilaments running lengthwise along the microtubule wall with the beta-tubulin subunit facing the microtubule plus end conferring a structural polarity. Microtubules usually have 13 protofilaments but different protofilament numbers can be found in some organisms and specialized cells. The cofactor is Mg(2+). In terms of processing, undergoes a tyrosination/detyrosination cycle, the cyclic removal and re-addition of a C-terminal tyrosine residue by the enzymes tubulin tyrosine carboxypeptidase (TTCP) and tubulin tyrosine ligase (TTL), respectively. Post-translationally, some glutamate residues at the C-terminus are either polyglutamylated or polyglycylated. These 2 modifications occur exclusively on glutamate residues and result in either polyglutamate or polyglycine chains on the gamma-carboxyl group. Both modifications can coexist on the same protein on adjacent residues, and lowering polyglycylation levels increases polyglutamylation, and reciprocally. The precise function of such modifications is still unclear but they regulate the assembly and dynamics of axonemal microtubules. Acetylation of alpha chains at Lys-40 stabilizes microtubules and affects affinity and processivity of microtubule motors. This modification has a role in multiple cellular functions, ranging from cell motility, cell cycle progression or cell differentiation to intracellular trafficking and signaling.

The protein resides in the cytoplasm. Its subcellular location is the cytoskeleton. It catalyses the reaction GTP + H2O = GDP + phosphate + H(+). Its function is as follows. Tubulin is the major constituent of microtubules, a cylinder consisting of laterally associated linear protofilaments composed of alpha- and beta-tubulin heterodimers. Microtubules grow by the addition of GTP-tubulin dimers to the microtubule end, where a stabilizing cap forms. Below the cap, tubulin dimers are in GDP-bound state, owing to GTPase activity of alpha-tubulin. The sequence is that of Tubulin alpha chain from Tetrahymena thermophila.